The sequence spans 275 residues: Large ribosomal subunit protein uL2 (275 aa).

The tract at residues 220 to 275 (QTRGAAMNPVDHPHGGGEGKTGSSGHPVSPWGMPAKGFKTRKKKASDKLIISRRKK) is disordered. Over residues 257–275 (FKTRKKKASDKLIISRRKK) the composition is skewed to basic residues.

This sequence belongs to the universal ribosomal protein uL2 family. As to quaternary structure, part of the 50S ribosomal subunit. Forms a bridge to the 30S subunit in the 70S ribosome.

Functionally, one of the primary rRNA binding proteins. Required for association of the 30S and 50S subunits to form the 70S ribosome, for tRNA binding and peptide bond formation. It has been suggested to have peptidyltransferase activity; this is somewhat controversial. Makes several contacts with the 16S rRNA in the 70S ribosome. In Wolinella succinogenes (strain ATCC 29543 / DSM 1740 / CCUG 13145 / JCM 31913 / LMG 7466 / NCTC 11488 / FDC 602W) (Vibrio succinogenes), this protein is Large ribosomal subunit protein uL2.